Consider the following 233-residue polypeptide: UPF0502 protein Mpe_A1449 (233 aa).

The protein belongs to the UPF0502 family.

The chain is UPF0502 protein Mpe_A1449 from Methylibium petroleiphilum (strain ATCC BAA-1232 / LMG 22953 / PM1).